Here is a 240-residue protein sequence, read N- to C-terminus: tRNA (guanine-N(1)-)-methyltransferase (240 aa).

S-adenosyl-L-methionine contacts are provided by residues glycine 112 and 132–137 (LGDFVL).

The protein belongs to the RNA methyltransferase TrmD family. As to quaternary structure, homodimer.

It is found in the cytoplasm. It catalyses the reaction guanosine(37) in tRNA + S-adenosyl-L-methionine = N(1)-methylguanosine(37) in tRNA + S-adenosyl-L-homocysteine + H(+). Functionally, specifically methylates guanosine-37 in various tRNAs. The polypeptide is tRNA (guanine-N(1)-)-methyltransferase (Cyanothece sp. (strain PCC 7425 / ATCC 29141)).